We begin with the raw amino-acid sequence, 266 residues long: Outer kinetochore KNL1 complex subunit ZWINT (266 aa).

Positions 95 to 115 are disordered; the sequence is DQNPDALASEDTSRQKATETK. Basic and acidic residues predominate over residues 105 to 115; that stretch reads DTSRQKATETK. Positions 136-237 form a coiled coil; the sequence is LSEALPQVKE…QRNQSYLQLL (102 aa). Phosphoserine is present on residues Ser232 and Ser265.

Component of the KNL1 complex composed of KNL1 and ZWINT. Part of the ten-subunit outer kinetochore KMN network that includes the KNL1, MIS12 and NDC80 complexes; a bioriented kinetochore contains approximately 150 copies of the network. Interacts with the MIS12 complex subunits MIS12 DSN1, and PMF1. Interacts with the NDC80 complex subunit NDC80 during mitosis. Interacts with ZW10. Interacts with CETN3. As to expression, expressed abundantly in brain and at lower levels in testis and kidney.

It is found in the nucleus. Its subcellular location is the chromosome. The protein resides in the centromere. The protein localises to the kinetochore. Acts as a component of the outer kinetochore KNL1 complex that serves as a docking point for spindle assembly checkpoint components and mediates microtubule-kinetochore interactions. Kinetochores, consisting of a centromere-associated inner segment and a microtubule-contacting outer segment, play a crucial role in chromosome segregation by mediating the physical connection between centromeric DNA and spindle microtubules. The outer kinetochore is made up of the ten-subunit KMN network, comprising the MIS12, NDC80 and KNL1 complexes, and auxiliary microtubule-associated components; together they connect the outer kinetochore with the inner kinetochore, bind microtubules, and mediate interactions with mitotic checkpoint proteins that delay anaphase until chromosomes are bioriented on the spindle. Targets the RZZ complex to the kinetochore at prometaphase. Recruits MAD2L1 to the kinetochore, but is not required for BUB1B localization. In addition to orienting mitotic chromosomes, it is also essential for alignment of homologous chromosomes during meiotic metaphase I. In meiosis I, required to activate the spindle assembly checkpoint at unattached kinetochores to correct erroneous kinetochore-microtubule attachments. The polypeptide is Outer kinetochore KNL1 complex subunit ZWINT (Zwint) (Rattus norvegicus (Rat)).